The chain runs to 142 residues: Organic hydroperoxide resistance protein-like 2 (142 aa).

This sequence belongs to the OsmC/Ohr family.

The sequence is that of Organic hydroperoxide resistance protein-like 2 from Staphylococcus epidermidis (strain ATCC 35984 / DSM 28319 / BCRC 17069 / CCUG 31568 / BM 3577 / RP62A).